The sequence spans 313 residues: Homoserine O-succinyltransferase (313 aa).

Cys-142 functions as the Acyl-thioester intermediate in the catalytic mechanism. 2 residues coordinate substrate: Lys-163 and Ser-192. His-235 acts as the Proton acceptor in catalysis. The active site involves Glu-237. Arg-249 contacts substrate.

Belongs to the MetA family.

It is found in the cytoplasm. The catalysed reaction is L-homoserine + succinyl-CoA = O-succinyl-L-homoserine + CoA. It participates in amino-acid biosynthesis; L-methionine biosynthesis via de novo pathway; O-succinyl-L-homoserine from L-homoserine: step 1/1. Transfers a succinyl group from succinyl-CoA to L-homoserine, forming succinyl-L-homoserine. This chain is Homoserine O-succinyltransferase, found in Vibrio atlanticus (strain LGP32) (Vibrio splendidus (strain Mel32)).